The primary structure comprises 743 residues: Phosphoribosylformylglycinamidine synthase subunit PurL (743 aa).

His54 is a catalytic residue. ATP-binding residues include Tyr57 and Lys96. Mg(2+) is bound at residue Glu98. Substrate contacts are provided by residues 99–102 (SHNH) and Arg121. His100 functions as the Proton acceptor in the catalytic mechanism. Asp122 is a binding site for Mg(2+). Gln245 contacts substrate. Asp273 contacts Mg(2+). Residue 317 to 319 (ESQ) participates in substrate binding. ATP is bound by residues Asp500 and Gly537. Residue Asn538 coordinates Mg(2+). Ser540 is a binding site for substrate.

This sequence belongs to the FGAMS family. As to quaternary structure, monomer. Part of the FGAM synthase complex composed of 1 PurL, 1 PurQ and 2 PurS subunits.

It is found in the cytoplasm. It catalyses the reaction N(2)-formyl-N(1)-(5-phospho-beta-D-ribosyl)glycinamide + L-glutamine + ATP + H2O = 2-formamido-N(1)-(5-O-phospho-beta-D-ribosyl)acetamidine + L-glutamate + ADP + phosphate + H(+). Its pathway is purine metabolism; IMP biosynthesis via de novo pathway; 5-amino-1-(5-phospho-D-ribosyl)imidazole from N(2)-formyl-N(1)-(5-phospho-D-ribosyl)glycinamide: step 1/2. Part of the phosphoribosylformylglycinamidine synthase complex involved in the purines biosynthetic pathway. Catalyzes the ATP-dependent conversion of formylglycinamide ribonucleotide (FGAR) and glutamine to yield formylglycinamidine ribonucleotide (FGAM) and glutamate. The FGAM synthase complex is composed of three subunits. PurQ produces an ammonia molecule by converting glutamine to glutamate. PurL transfers the ammonia molecule to FGAR to form FGAM in an ATP-dependent manner. PurS interacts with PurQ and PurL and is thought to assist in the transfer of the ammonia molecule from PurQ to PurL. The protein is Phosphoribosylformylglycinamidine synthase subunit PurL of Bacillus pumilus (strain SAFR-032).